A 404-amino-acid polypeptide reads, in one-letter code: Cysteine desulfurase IscS (404 aa).

Pyridoxal 5'-phosphate contacts are provided by residues 75–76, Asn155, Gln183, and 203–205; these read AT and SAH. Lys206 carries the post-translational modification N6-(pyridoxal phosphate)lysine. A pyridoxal 5'-phosphate-binding site is contributed by Thr243. Catalysis depends on Cys328, which acts as the Cysteine persulfide intermediate. Cys328 is a binding site for [2Fe-2S] cluster.

It belongs to the class-V pyridoxal-phosphate-dependent aminotransferase family. NifS/IscS subfamily. As to quaternary structure, homodimer. Forms a heterotetramer with IscU, interacts with other sulfur acceptors. Pyridoxal 5'-phosphate is required as a cofactor.

It localises to the cytoplasm. The catalysed reaction is (sulfur carrier)-H + L-cysteine = (sulfur carrier)-SH + L-alanine. The protein operates within cofactor biosynthesis; iron-sulfur cluster biosynthesis. Its function is as follows. Master enzyme that delivers sulfur to a number of partners involved in Fe-S cluster assembly, tRNA modification or cofactor biosynthesis. Catalyzes the removal of elemental sulfur atoms from cysteine to produce alanine. Functions as a sulfur delivery protein for Fe-S cluster synthesis onto IscU, an Fe-S scaffold assembly protein, as well as other S acceptor proteins. The sequence is that of Cysteine desulfurase IscS from Shewanella woodyi (strain ATCC 51908 / MS32).